Consider the following 32-residue polypeptide: Cytochrome b6-f complex subunit 7 (32 aa).

Residues 5–25 form a helical membrane-spanning segment; the sequence is IFTVAGVMWALVLTGLSVGFG.

Belongs to the PetM family. The 4 large subunits of the cytochrome b6-f complex are cytochrome b6, subunit IV (17 kDa polypeptide, PetD), cytochrome f and the Rieske protein, while the 4 small subunits are PetG, PetL, PetM and PetN. The complex functions as a dimer.

The protein resides in the plastid. The protein localises to the chloroplast thylakoid membrane. In terms of biological role, component of the cytochrome b6-f complex, which mediates electron transfer between photosystem II (PSII) and photosystem I (PSI), cyclic electron flow around PSI, and state transitions. The polypeptide is Cytochrome b6-f complex subunit 7 (Emiliania huxleyi (Coccolithophore)).